Reading from the N-terminus, the 240-residue chain is Probable peptide export permease protein YydJ (240 aa).

The next 6 membrane-spanning stretches (helical) occupy residues Val-13–Val-33, Ser-50–Ile-70, Ile-97–Leu-117, Ala-126–Ile-146, Ile-153–Ile-173, and Val-210–Phe-230.

As to quaternary structure, the complex is composed of 2 ATP-binding proteins (YydI), two transmembrane proteins (YydJ).

Its subcellular location is the cell membrane. Functionally, suggested to be part of an ABC transporter complex YydIJ involved in export of the modified peptide YydF. The polypeptide is Probable peptide export permease protein YydJ (yydJ) (Bacillus subtilis (strain 168)).